The sequence spans 131 residues: Transcription antitermination protein NusB (131 aa).

It belongs to the NusB family.

Its function is as follows. Involved in transcription antitermination. Required for transcription of ribosomal RNA (rRNA) genes. Binds specifically to the boxA antiterminator sequence of the ribosomal RNA (rrn) operons. The sequence is that of Transcription antitermination protein NusB from Bacillus pumilus (strain SAFR-032).